The chain runs to 347 residues: Phenylalanine--tRNA ligase alpha subunit (347 aa).

E261 contacts Mg(2+).

This sequence belongs to the class-II aminoacyl-tRNA synthetase family. Phe-tRNA synthetase alpha subunit type 1 subfamily. As to quaternary structure, tetramer of two alpha and two beta subunits. The cofactor is Mg(2+).

The protein localises to the cytoplasm. The catalysed reaction is tRNA(Phe) + L-phenylalanine + ATP = L-phenylalanyl-tRNA(Phe) + AMP + diphosphate + H(+). This is Phenylalanine--tRNA ligase alpha subunit from Streptococcus uberis (strain ATCC BAA-854 / 0140J).